The following is a 354-amino-acid chain: Ferrochelatase (354 aa).

The Fe cation site is built by H214 and E295.

It belongs to the ferrochelatase family.

The protein localises to the cytoplasm. The catalysed reaction is heme b + 2 H(+) = protoporphyrin IX + Fe(2+). Its pathway is porphyrin-containing compound metabolism; protoheme biosynthesis; protoheme from protoporphyrin-IX: step 1/1. Its function is as follows. Catalyzes the ferrous insertion into protoporphyrin IX. This chain is Ferrochelatase, found in Burkholderia ambifaria (strain MC40-6).